We begin with the raw amino-acid sequence, 101 residues long: Large ribosomal subunit protein bL28 (101 aa).

It belongs to the bacterial ribosomal protein bL28 family.

In Rhodopseudomonas palustris (strain BisA53), this protein is Large ribosomal subunit protein bL28.